The primary structure comprises 136 residues: Ribosome-binding factor A (136 aa).

This sequence belongs to the RbfA family. Monomer. Binds 30S ribosomal subunits, but not 50S ribosomal subunits or 70S ribosomes.

It localises to the cytoplasm. In terms of biological role, one of several proteins that assist in the late maturation steps of the functional core of the 30S ribosomal subunit. Associates with free 30S ribosomal subunits (but not with 30S subunits that are part of 70S ribosomes or polysomes). Required for efficient processing of 16S rRNA. May interact with the 5'-terminal helix region of 16S rRNA. In Rhodopseudomonas palustris (strain BisB5), this protein is Ribosome-binding factor A.